The primary structure comprises 615 residues: Medium-chain acyl-CoA ligase ACSF2, mitochondrial (615 aa).

The transit peptide at 1 to 49 directs the protein to the mitochondrion; the sequence is MAVYLGMLRLGRLCVASLGARGPRTPLSRPWPNSKLQGVRAFSSGMVDC. K179 bears the N6-acetyllysine mark. K182 carries the post-translational modification N6-acetyllysine; alternate. K182 is modified (N6-succinyllysine; alternate). Position 199 is an N6-acetyllysine (K199). 263 to 271 serves as a coordination point for ATP; it reads TSGTTGNPK. Residues K340 and K398 each carry the N6-acetyllysine modification. The residue at position 478 (K478) is an N6-succinyllysine. Positions 493 and 508 each coordinate ATP. K510 is subject to N6-acetyllysine. 2 positions are modified to N6-acetyllysine; alternate: K544 and K570. N6-succinyllysine; alternate occurs at positions 544 and 570. Residue K599 coordinates ATP. N6-succinyllysine is present on K599.

It belongs to the ATP-dependent AMP-binding enzyme family.

It localises to the mitochondrion. It carries out the reaction a medium-chain fatty acid + ATP + CoA = a medium-chain fatty acyl-CoA + AMP + diphosphate. The enzyme catalyses octanoate + ATP + CoA = octanoyl-CoA + AMP + diphosphate. Acyl-CoA synthases catalyze the initial reaction in fatty acid metabolism, by forming a thioester with CoA. Has some preference toward medium-chain substrates. Plays a role in adipocyte differentiation. This is Medium-chain acyl-CoA ligase ACSF2, mitochondrial from Rattus norvegicus (Rat).